A 264-amino-acid chain; its full sequence is Putative hydro-lyase RBAM_004300 (264 aa).

It belongs to the D-glutamate cyclase family.

The polypeptide is Putative hydro-lyase RBAM_004300 (Bacillus velezensis (strain DSM 23117 / BGSC 10A6 / LMG 26770 / FZB42) (Bacillus amyloliquefaciens subsp. plantarum)).